Consider the following 604-residue polypeptide: Polycomb group protein EMF2B (604 aa).

A C2H2-type zinc finger spans residues 310-331; that stretch reads CPFCLVPCGSFKGLGCHLNASH. The interval 396–440 is disordered; sequence PHIVDSGSPEDAQAGSEDDYVQRENGSSVAHASVDPANSLHGSNL. Positions 454–589 are VEFS-box; it reads LSVERADPRN…DARAMNACNT (136 aa).

This sequence belongs to the VEFS (VRN2-EMF2-FIS2-SU(Z)12) family. As to quaternary structure, component of the polycomb repressive complex 2 (PRC2), composed of the core PRC2 components FIE2, EZ1 and CLF. PRC2 methylates 'Lys-27' residues of histone H3 (H3K27me3), leading to transcriptional repression of the affected target gene. Widely expressed.

Its function is as follows. Polycomb group (PcG) protein. PcG proteins act by forming multiprotein complexes, which are required to maintain the transcriptionally repressive state of homeotic genes throughout development. PcG proteins are not required to initiate repression, but to maintain it during later stages of development. They act via the methylation of histones, rendering chromatin heritably changed in its expressibility. Polycomb group (PcG) protein involved in the repression of flowering under long day (LD) conditions. Regulates floret development. The protein is Polycomb group protein EMF2B of Oryza sativa subsp. japonica (Rice).